The sequence spans 130 residues: Small ribosomal subunit protein uS9 (130 aa).

The segment at 111–130 (VERKKPGLKKARKASQFSKR) is disordered. The segment covering 116 to 130 (PGLKKARKASQFSKR) has biased composition (basic residues).

This sequence belongs to the universal ribosomal protein uS9 family.

The polypeptide is Small ribosomal subunit protein uS9 (Lactococcus lactis subsp. lactis (strain IL1403) (Streptococcus lactis)).